The primary structure comprises 426 residues: MSTEAPVLGILCGGGPAPGLNGVIAGATLYALRLGWKVIGFMEGFKYLCTGDIETVKAHTIDLTYDIVSRIHFQGGTIIQTSRANPRKSTELQENVRKCLRALKVRYFLTIGGDDTASSAVSVAQGMDGNEISVISCPKTIDNDLPLPADQSTFGFHTARSLGMEIIRNLMVDSKSAPRWFLVEAMGRSAGHLALGMAEASGAHLCLIPEEFKQDEIEFEDVVELVEATILKRLAYGKNYGVCVLAEGLVSKMSKKALYRLFGNREPPTDPHGHILLDDAELARSLSEELLKRLGNLGIRITPKKIGYELRCADPVAFDAVYTRELGYGAIDAFLNGHSAALIVRENGQVKPVQFKDLLDPATGRVRTRLVDVTSQSFKVARVYMWRMSKKDYENKDLVARVAAAGKMTPEAFTEKFAHLTDVVIE.

Gly-15 lines the diphosphate pocket. Asp-114 is a Mg(2+) binding site. Substrate is bound by residues 140 to 142 (TID), 186 to 188 (MGR), Glu-247, and 308 to 311 (YELR). The active-site Proton acceptor is the Asp-142.

This sequence belongs to the phosphofructokinase type A (PFKA) family. PPi-dependent PFK group II subfamily. Clade 'Short' sub-subfamily. Homotetramer. Requires Mg(2+) as cofactor.

It localises to the cytoplasm. It catalyses the reaction beta-D-fructose 6-phosphate + diphosphate = beta-D-fructose 1,6-bisphosphate + phosphate + H(+). It functions in the pathway carbohydrate degradation; glycolysis; D-glyceraldehyde 3-phosphate and glycerone phosphate from D-glucose: step 3/4. Its activity is regulated as follows. Non-allosteric. In terms of biological role, catalyzes the phosphorylation of D-fructose 6-phosphate, the first committing step of glycolysis. Uses inorganic phosphate (PPi) as phosphoryl donor instead of ATP like common ATP-dependent phosphofructokinases (ATP-PFKs), which renders the reaction reversible, and can thus function both in glycolysis and gluconeogenesis. Consistently, PPi-PFK can replace the enzymes of both the forward (ATP-PFK) and reverse (fructose-bisphosphatase (FBPase)) reactions. This chain is Pyrophosphate--fructose 6-phosphate 1-phosphotransferase 2 (pfk2), found in Trichomonas vaginalis (strain ATCC PRA-98 / G3).